The primary structure comprises 356 residues: UDP-N-acetylglucosamine--N-acetylmuramyl-(pentapeptide) pyrophosphoryl-undecaprenol N-acetylglucosamine transferase (356 aa).

Residues 11–13 (TGG), Asn-117, Arg-160, Ser-188, and Gln-290 each bind UDP-N-acetyl-alpha-D-glucosamine.

This sequence belongs to the glycosyltransferase 28 family. MurG subfamily.

The protein resides in the cell inner membrane. It catalyses the reaction di-trans,octa-cis-undecaprenyl diphospho-N-acetyl-alpha-D-muramoyl-L-alanyl-D-glutamyl-meso-2,6-diaminopimeloyl-D-alanyl-D-alanine + UDP-N-acetyl-alpha-D-glucosamine = di-trans,octa-cis-undecaprenyl diphospho-[N-acetyl-alpha-D-glucosaminyl-(1-&gt;4)]-N-acetyl-alpha-D-muramoyl-L-alanyl-D-glutamyl-meso-2,6-diaminopimeloyl-D-alanyl-D-alanine + UDP + H(+). The protein operates within cell wall biogenesis; peptidoglycan biosynthesis. Its function is as follows. Cell wall formation. Catalyzes the transfer of a GlcNAc subunit on undecaprenyl-pyrophosphoryl-MurNAc-pentapeptide (lipid intermediate I) to form undecaprenyl-pyrophosphoryl-MurNAc-(pentapeptide)GlcNAc (lipid intermediate II). This is UDP-N-acetylglucosamine--N-acetylmuramyl-(pentapeptide) pyrophosphoryl-undecaprenol N-acetylglucosamine transferase from Rickettsia bellii (strain RML369-C).